The following is an 86-amino-acid chain: U-myrmeciitoxin(01)-Mg1a (86 aa).

A signal peptide spans 1 to 26 (MKLLYLLLTLAIIFVLTIVHAPNVEA). Positions 27-52 (KALADPESDAVGFADAFGDADAEATG) are excised as a propeptide. Leu-85 carries the leucine amide modification.

It belongs to the formicidae venom precursor-01 superfamily. As to expression, expressed by the venom gland. This toxin is detected along the entire venom gland, as well as in the venom reservoir, the venom duct and in the venom. No toxin are detected in the Dufour's gland.

The protein localises to the secreted. The protein resides in the target cell membrane. In terms of biological role, toxin that may interact with target cell membranes, producing a concentration-dependent leak in ion conductance, possibly via multimeric pore formation. It produces an immediate sharp increase of calcium concentration in all DRG neurons. This influx in calcium stabilizes without resulting in any observable dye leakage, showing that the effect is not simply cytolytic. This toxin may be one of the major contributors to the pain associated with envenomation. The toxin also displays a weak cytotoxicity (on HEK cells) and some antimicrobial activity (MIC=2.5 uM on C.neoformans (var. grubii), MIC=10.2 uM on S.aureus), but is not hemolytic to human erythtrocytes. In vivo, intraplantar injection into mice causes spontaneous nocifensive behavior (licking, flinching, or shaking of the paw), which lasts 5-7 minutes (10 and 100 uM tested). Mechanical and heat hypoalgesia are observed at 20 and 25 minutes after injection (highest dose tested of 100 uM). In vivo, injection into crickets (A.domesticus) causes an immediate, dose-dependent, reversible and nonlethal incapacitation that lasts about 53 minutes at the highest dose tested (60 ug/g). This chain is U-myrmeciitoxin(01)-Mg1a, found in Myrmecia gulosa (Red bulldog ant).